The primary structure comprises 452 residues: UDP-N-acetylmuramoyl-L-alanine--L-glutamate ligase (452 aa).

ATP is bound at residue 118 to 124; it reads GSKGKST.

Belongs to the MurCDEF family. MurD2 subfamily.

Its subcellular location is the cytoplasm. It catalyses the reaction UDP-N-acetyl-alpha-D-muramoyl-L-alanine + L-glutamate + ATP = UDP-N-acetyl-alpha-D-muramoyl-L-alanyl-L-glutamate + ADP + phosphate + H(+). It functions in the pathway cell wall biogenesis; peptidoglycan biosynthesis. Cell wall formation. Catalyzes the addition of L-glutamate to the nucleotide precursor UDP-N-acetylmuramoyl-L-alanine. This is UDP-N-acetylmuramoyl-L-alanine--L-glutamate ligase from Micromonospora sp. (strain ATCC 39149 / NRRL 15099 / SCC 1413).